The chain runs to 140 residues: MLEIDNQTPLESDFLLLEKIANVLAPTQIIELVLVSDETIREINKDLRGCDYATDVLSFPLEAIPHTPLGSVVINAPLAQTNALKLGHSLENEIALLFIHGVLHLLGYDHEKDKGEQRQKESELIKAFNLPLSLIERTQD.

3 residues coordinate Zn(2+): His-100, His-104, and His-110.

The protein belongs to the endoribonuclease YbeY family. The cofactor is Zn(2+).

It localises to the cytoplasm. In terms of biological role, single strand-specific metallo-endoribonuclease involved in late-stage 70S ribosome quality control and in maturation of the 3' terminus of the 16S rRNA. The polypeptide is Endoribonuclease YbeY (Helicobacter pylori (strain ATCC 700392 / 26695) (Campylobacter pylori)).